The following is a 223-amino-acid chain: Deoxyribose-phosphate aldolase 2 (223 aa).

Aspartate 92 serves as the catalytic Proton donor/acceptor. The Schiff-base intermediate with acetaldehyde role is filled by lysine 154. The Proton donor/acceptor role is filled by lysine 183.

This sequence belongs to the DeoC/FbaB aldolase family. DeoC type 1 subfamily.

It localises to the cytoplasm. It catalyses the reaction 2-deoxy-D-ribose 5-phosphate = D-glyceraldehyde 3-phosphate + acetaldehyde. Its pathway is carbohydrate degradation; 2-deoxy-D-ribose 1-phosphate degradation; D-glyceraldehyde 3-phosphate and acetaldehyde from 2-deoxy-alpha-D-ribose 1-phosphate: step 2/2. Functionally, catalyzes a reversible aldol reaction between acetaldehyde and D-glyceraldehyde 3-phosphate to generate 2-deoxy-D-ribose 5-phosphate. The chain is Deoxyribose-phosphate aldolase 2 from Oceanobacillus iheyensis (strain DSM 14371 / CIP 107618 / JCM 11309 / KCTC 3954 / HTE831).